The sequence spans 579 residues: Glypican-2 (579 aa).

Positions 1–23 (MSALRPLLLLLLPLCPGPGPGPG) are cleaved as a signal peptide. Serine 55, serine 92, and serine 155 each carry an O-linked (Xyl...) (heparan sulfate) serine glycan. Disordered regions lie at residues 444-468 (GGSPAEQVNNPELKVDASGPDVPTR) and 485-555 (ALGH…RSGG). 2 O-linked (Xyl...) (heparan sulfate) serine glycosylation sites follow: serine 500 and serine 502. Positions 520 to 529 (PARPPRPPYP) are enriched in pro residues. A lipid anchor (GPI-anchor amidated glycine) is attached at glycine 554. Residues 555 to 579 (GASIGFHTQTILILSLSALALLGPR) constitute a propeptide, removed in mature form.

The protein belongs to the glypican family. In terms of assembly, interacts (via heparan sulfate) with PTN; this interaction promotes neurite outgrowth through binding of PTN with chondroitin sulfate of proteoglycans, thereby releasing PTPRS of chondroitin sulfate proteoglycans (CSPGs) and leading to binding with heparan sulfate of GPC2. Interacts (heparan sulfate chain) with MDK; this interaction is inhibited by heparin followed by chondroitin sulfate E; this interaction induces GPC2 clustering through heparan sulfate chain; this interaction induces neuronal cell adhesion and neurite outgrowth.

Its subcellular location is the cell membrane. The protein localises to the secreted. The protein resides in the extracellular space. Its function is as follows. Cell surface proteoglycan that bears heparan sulfate. May fulfill a function related to the motile behaviors of developing neurons. The polypeptide is Glypican-2 (GPC2) (Homo sapiens (Human)).